The chain runs to 693 residues: Triadin (693 aa).

The Cytoplasmic segment spans residues 1 to 47 (MTEITAEGNASTTTTVIDNKNGCIPKSPGKVLKRSVTEDIVTTFSSP). The helical transmembrane segment at 48-68 (AAWLLVIALIITWSAVAIVMF) threads the bilayer. At 69–693 (DLVDYKNFSA…NSPGQKQQEQ (625 aa)) the chain is on the lumenal side. A compositionally biased stretch (acidic residues) spans 117–130 (EGDEDDEDADEDID). Disordered stretches follow at residues 117–260 (EGDE…AVHE), 278–649 (GDLK…QTRP), and 666–693 (FQFP…QQEQ). 2 stretches are compositionally biased toward basic and acidic residues: residues 131–241 (KGEI…KETP) and 249–260 (KKDDKEMPAVHE). Ser301 is modified (phosphoserine). A compositionally biased stretch (basic and acidic residues) spans 305–352 (LEEKEKEEKKKMEKKDTSDTKKKEKEVKKKSEETTIDGKGKEPGKPPE). Polar residues predominate over residues 354-364 (KQMTAKLTTQA). Basic and acidic residues-rich tracts occupy residues 366–427 (ARKD…KEEI) and 438–502 (GKKE…KEAK). N-linked (GlcNAc...) asparagine glycosylation occurs at Asn515. 2 stretches are compositionally biased toward basic and acidic residues: residues 526-547 (VKPE…DKPK) and 558-579 (DSGK…REEN). A glycan (N-linked (GlcNAc...) asparagine) is linked at Asn584. Positions 587 to 637 (KAEKPGKIPKDSKEAPASKKDKEDSKEAPTSKKDKEDSKDVPHSKKDKEVT) are enriched in basic and acidic residues. Over residues 672 to 693 (PVQQPGENPGKTNSPGQKQQEQ) the composition is skewed to polar residues.

As to quaternary structure, homooligomer of variable subunit number; disulfide-linked. Interacts with CASQ1 and RYR1 in skeletal muscle. Interacts with CASQ2. In terms of processing, phosphorylated by CaMK2. N-glycosylated. As to expression, detected in heart (at protein level). Detected in heart.

The protein resides in the sarcoplasmic reticulum membrane. Its function is as follows. Contributes to the regulation of lumenal Ca2+ release via the sarcoplasmic reticulum calcium release channels RYR1 and RYR2, a key step in triggering skeletal and heart muscle contraction. Required for normal organization of the triad junction, where T-tubules and the sarcoplasmic reticulum terminal cisternae are in close contact. Required for normal skeletal muscle strength. Plays a role in excitation-contraction coupling in the heart and in regulating the rate of heart beats. The polypeptide is Triadin (Mus musculus (Mouse)).